The following is a 374-amino-acid chain: Ribosomal RNA large subunit methyltransferase M (374 aa).

Residues S188, 221 to 224 (CPGG), D240, D260, and D276 each bind S-adenosyl-L-methionine. The Proton acceptor role is filled by K305.

It belongs to the class I-like SAM-binding methyltransferase superfamily. RNA methyltransferase RlmE family. RlmM subfamily. Monomer.

The protein localises to the cytoplasm. The enzyme catalyses cytidine(2498) in 23S rRNA + S-adenosyl-L-methionine = 2'-O-methylcytidine(2498) in 23S rRNA + S-adenosyl-L-homocysteine + H(+). Functionally, catalyzes the 2'-O-methylation at nucleotide C2498 in 23S rRNA. In Edwardsiella ictaluri (strain 93-146), this protein is Ribosomal RNA large subunit methyltransferase M.